The sequence spans 210 residues: 7-carboxy-7-deazaguanine synthase (210 aa).

Substrate contacts are provided by residues 25–27 and Arg40; that span reads IQG. Residues 31 to 210 form the Radical SAM core domain; the sequence is HTGTAAYFIR…LQTHKYLNIP (180 aa). Residues Cys44, Cys48, and Cys51 each coordinate [4Fe-4S] cluster. Position 84 (Thr84) interacts with substrate. Residues Gly86 and 127 to 129 contribute to the S-adenosyl-L-methionine site; that span reads SPK. Pro210 contributes to the substrate binding site.

The protein belongs to the radical SAM superfamily. 7-carboxy-7-deazaguanine synthase family. Homodimer. Requires [4Fe-4S] cluster as cofactor. It depends on S-adenosyl-L-methionine as a cofactor. The cofactor is Mg(2+).

The enzyme catalyses 6-carboxy-5,6,7,8-tetrahydropterin + H(+) = 7-carboxy-7-deazaguanine + NH4(+). The protein operates within purine metabolism; 7-cyano-7-deazaguanine biosynthesis. In terms of biological role, catalyzes the complex heterocyclic radical-mediated conversion of 6-carboxy-5,6,7,8-tetrahydropterin (CPH4) to 7-carboxy-7-deazaguanine (CDG), a step common to the biosynthetic pathways of all 7-deazapurine-containing compounds. This chain is 7-carboxy-7-deazaguanine synthase, found in Flavobacterium psychrophilum (strain ATCC 49511 / DSM 21280 / CIP 103535 / JIP02/86).